A 256-amino-acid polypeptide reads, in one-letter code: Pimeloyl-[acyl-carrier protein] methyl ester esterase (256 aa).

In terms of domain architecture, AB hydrolase-1 spans 16–240 (LVILHGWGVN…PKASHAPFLS (225 aa)). Residues Trp22, 80 to 81 (SL), and 143 to 147 (FLAIQ) contribute to the substrate site. The active-site Nucleophile is Ser80. Active-site residues include Asp207 and His235. His235 serves as a coordination point for substrate.

This sequence belongs to the AB hydrolase superfamily. Carboxylesterase BioH family. As to quaternary structure, monomer.

The protein localises to the cytoplasm. The catalysed reaction is 6-carboxyhexanoyl-[ACP] methyl ester + H2O = 6-carboxyhexanoyl-[ACP] + methanol + H(+). It participates in cofactor biosynthesis; biotin biosynthesis. In terms of biological role, the physiological role of BioH is to remove the methyl group introduced by BioC when the pimeloyl moiety is complete. It allows to synthesize pimeloyl-ACP via the fatty acid synthetic pathway through the hydrolysis of the ester bonds of pimeloyl-ACP esters. The chain is Pimeloyl-[acyl-carrier protein] methyl ester esterase from Shewanella woodyi (strain ATCC 51908 / MS32).